We begin with the raw amino-acid sequence, 334 residues long: Lipoyl synthase (334 aa).

Residues 1–36 are disordered; it reads MSDALIAPNASSSEAPQSPAEHYDPTRKQKSADKTA. Residues 7-20 are compositionally biased toward low complexity; sequence APNASSSEAPQSPA. The segment covering 21–36 has biased composition (basic and acidic residues); it reads EHYDPTRKQKSADKTA. [4Fe-4S] cluster contacts are provided by C81, C86, C92, C107, C111, C114, and S321. The 219-residue stretch at 92 to 310 folds into the Radical SAM core domain; that stretch reads CFGKGTATFM…EEEAYKMGFT (219 aa).

This sequence belongs to the radical SAM superfamily. Lipoyl synthase family. [4Fe-4S] cluster serves as cofactor.

Its subcellular location is the cytoplasm. It catalyses the reaction [[Fe-S] cluster scaffold protein carrying a second [4Fe-4S](2+) cluster] + N(6)-octanoyl-L-lysyl-[protein] + 2 oxidized [2Fe-2S]-[ferredoxin] + 2 S-adenosyl-L-methionine + 4 H(+) = [[Fe-S] cluster scaffold protein] + N(6)-[(R)-dihydrolipoyl]-L-lysyl-[protein] + 4 Fe(3+) + 2 hydrogen sulfide + 2 5'-deoxyadenosine + 2 L-methionine + 2 reduced [2Fe-2S]-[ferredoxin]. The protein operates within protein modification; protein lipoylation via endogenous pathway; protein N(6)-(lipoyl)lysine from octanoyl-[acyl-carrier-protein]: step 2/2. In terms of biological role, catalyzes the radical-mediated insertion of two sulfur atoms into the C-6 and C-8 positions of the octanoyl moiety bound to the lipoyl domains of lipoate-dependent enzymes, thereby converting the octanoylated domains into lipoylated derivatives. The protein is Lipoyl synthase of Cupriavidus taiwanensis (strain DSM 17343 / BCRC 17206 / CCUG 44338 / CIP 107171 / LMG 19424 / R1) (Ralstonia taiwanensis (strain LMG 19424)).